Consider the following 362-residue polypeptide: Protein RecA (362 aa).

Residue 67–74 participates in ATP binding; it reads GPESSGKT. The span at 337-356 shows a compositional bias: low complexity; sequence VADAPADSAPAPVAAVAPKA. The interval 337–362 is disordered; sequence VADAPADSAPAPVAAVAPKASARKSA.

This sequence belongs to the RecA family.

Its subcellular location is the cytoplasm. In terms of biological role, can catalyze the hydrolysis of ATP in the presence of single-stranded DNA, the ATP-dependent uptake of single-stranded DNA by duplex DNA, and the ATP-dependent hybridization of homologous single-stranded DNAs. It interacts with LexA causing its activation and leading to its autocatalytic cleavage. The protein is Protein RecA of Clavibacter michiganensis subsp. michiganensis (strain NCPPB 382).